Reading from the N-terminus, the 264-residue chain is MGNSGFYLHNTSNCVFADNIKVGQMTEPLTDQQIILGTSTTPVAAKITASEGISLTITNNAQANSSVNIGLDAEKAYQLILDKLGDQIFDGITGSIVESAVQDIIDKITSDPSLGLLKAFYNFQITGKIQCNGLFTSSNVTTLLGGTEIGRFTVTPRSSGSMFLVSADIIASRMEGGVVLALVKEGDTQPCAISYGYSSGVPNLCSLKTCVTNSGSTPTTYSLRIGGLESGVVWVNALSNGNDILGITNTSNVSFLEVIPQKNT.

The polypeptide is Virulence plasmid protein pGP3-D (Chlamydia muridarum (strain MoPn / Nigg)).